The following is a 141-amino-acid chain: Hemoglobin subunit alpha-D (141 aa).

The region spanning 1 to 141 (MLTADDKKLL…VAAVLAEKYR (141 aa)) is the Globin domain. Heme b contacts are provided by His58 and His87.

Belongs to the globin family. Heterotetramer of two alpha-D chains and two beta chains. As to expression, red blood cells.

Involved in oxygen transport from the lung to the various peripheral tissues. The polypeptide is Hemoglobin subunit alpha-D (HBAD) (Anser anser anser (Western greylag goose)).